Reading from the N-terminus, the 327-residue chain is Chromatin modification-related protein eaf3 (327 aa).

Residues 13–66 (ERVLCFHHEILYEAKILDLRHTDPDDRKSPYEYLVHYKGWKNTWDDWVPQDRLR) enclose the Tudor-knot domain. Residues 85–132 (AALRQKSTKTSLKKKGGSDHSSARGSEERQTSVPGRGTKRARDNDIEK) are disordered. Over residues 100 to 114 (GGSDHSSARGSEERQ) the composition is skewed to basic and acidic residues. One can recognise an MRG domain in the interval 138–312 (TRPSVRIVMP…ASNEYIEKSR (175 aa)).

Belongs to the MRG family. Component of the NuA4 histone acetyltransferase complex.

Its subcellular location is the nucleus. In terms of biological role, involved in deacetylation of histones, chromatin assembly and chromosome segregation. May act as a transcriptional oscillator, directing histone deacetylases to specific chromosomal domains. Component of the NuA4 histone acetyltransferase complex which is involved in transcriptional activation of selected genes principally by acetylation of nucleosomal histone H4 and H2A. The NuA4 complex is also involved in DNA repair. This is Chromatin modification-related protein eaf3 (eaf3) from Emericella nidulans (strain FGSC A4 / ATCC 38163 / CBS 112.46 / NRRL 194 / M139) (Aspergillus nidulans).